The following is a 244-amino-acid chain: Phosphoadenosine 5'-phosphosulfate reductase (244 aa).

Catalysis depends on cysteine 239, which acts as the Nucleophile; cysteine thiosulfonate intermediate.

It belongs to the PAPS reductase family. CysH subfamily.

It is found in the cytoplasm. The enzyme catalyses [thioredoxin]-disulfide + sulfite + adenosine 3',5'-bisphosphate + 2 H(+) = [thioredoxin]-dithiol + 3'-phosphoadenylyl sulfate. It functions in the pathway sulfur metabolism; hydrogen sulfide biosynthesis; sulfite from sulfate: step 3/3. Functionally, catalyzes the formation of sulfite from phosphoadenosine 5'-phosphosulfate (PAPS) using thioredoxin as an electron donor. The chain is Phosphoadenosine 5'-phosphosulfate reductase from Pectobacterium atrosepticum (strain SCRI 1043 / ATCC BAA-672) (Erwinia carotovora subsp. atroseptica).